We begin with the raw amino-acid sequence, 463 residues long: Adenosylhomocysteinase (463 aa).

Residues threonine 54, aspartate 128, and glutamate 189 each contribute to the substrate site. 190-192 lines the NAD(+) pocket; it reads TTT. Substrate-binding residues include lysine 219 and aspartate 223. NAD(+) contacts are provided by residues asparagine 224, 253–258, glutamate 276, asparagine 311, 332–334, and asparagine 377; these read GYGDVG and IGH.

The protein belongs to the adenosylhomocysteinase family. In terms of assembly, homotetramer. NAD(+) is required as a cofactor.

The protein resides in the cytoplasm. It catalyses the reaction S-adenosyl-L-homocysteine + H2O = L-homocysteine + adenosine. It participates in amino-acid biosynthesis; L-homocysteine biosynthesis; L-homocysteine from S-adenosyl-L-homocysteine: step 1/1. Its function is as follows. May play a key role in the regulation of the intracellular concentration of adenosylhomocysteine. This chain is Adenosylhomocysteinase, found in Rhodobacter capsulatus (strain ATCC BAA-309 / NBRC 16581 / SB1003).